Consider the following 380-residue polypeptide: Cytochrome b (380 aa).

4 helical membrane-spanning segments follow: residues 34–54 (FGSL…LLAM), 78–99 (WLIR…YLHI), 114–134 (WNTG…GYVL), and 179–199 (FFAL…IHLT). 2 residues coordinate heme b: His-84 and His-98. Heme b contacts are provided by His-183 and His-197. Residue His-202 coordinates a ubiquinone. The next 4 helical transmembrane spans lie at 227 to 247 (TKDT…ALFS), 289 to 309 (LGGV…PLLH), 321 to 341 (LSQL…WIGS), and 348 to 368 (FIII…ILFP).

The protein belongs to the cytochrome b family. The cytochrome bc1 complex contains 11 subunits: 3 respiratory subunits (MT-CYB, CYC1 and UQCRFS1), 2 core proteins (UQCRC1 and UQCRC2) and 6 low-molecular weight proteins (UQCRH/QCR6, UQCRB/QCR7, UQCRQ/QCR8, UQCR10/QCR9, UQCR11/QCR10 and a cleavage product of UQCRFS1). This cytochrome bc1 complex then forms a dimer. The cofactor is heme b.

It is found in the mitochondrion inner membrane. Component of the ubiquinol-cytochrome c reductase complex (complex III or cytochrome b-c1 complex) that is part of the mitochondrial respiratory chain. The b-c1 complex mediates electron transfer from ubiquinol to cytochrome c. Contributes to the generation of a proton gradient across the mitochondrial membrane that is then used for ATP synthesis. This Aptenodytes patagonicus (King penguin) protein is Cytochrome b (MT-CYB).